The sequence spans 445 residues: Guanosine nucleotide diphosphate dissociation inhibitor At5g09550 (445 aa).

The protein belongs to the Rab GDI family.

In terms of biological role, regulates the GDP/GTP exchange reaction of most RAB proteins by inhibiting the dissociation of GDP from them, and the subsequent binding of GTP. This is Guanosine nucleotide diphosphate dissociation inhibitor At5g09550 from Arabidopsis thaliana (Mouse-ear cress).